The sequence spans 95 residues: MLYTLSRSPWQVDIHALLRLVRSGDDILLMQNGVVAALHDSRYVAVLLASPARVVALENDVEARGLVAQISSSIDTISYTEFVNLTVKHASQMAW.

Belongs to the DsrH/TusB family. Heterohexamer, formed by a dimer of trimers. The hexameric TusBCD complex contains 2 copies each of TusB, TusC and TusD. The TusBCD complex interacts with TusE.

It is found in the cytoplasm. In terms of biological role, part of a sulfur-relay system required for 2-thiolation of 5-methylaminomethyl-2-thiouridine (mnm(5)s(2)U) at tRNA wobble positions. The polypeptide is Protein TusB (Cronobacter sakazakii (strain ATCC BAA-894) (Enterobacter sakazakii)).